The following is a 232-amino-acid chain: tRNA (guanine-N(1)-)-methyltransferase (232 aa).

S-adenosyl-L-methionine contacts are provided by residues Gly111 and 131–136 (IGDYIL).

It belongs to the RNA methyltransferase TrmD family. Homodimer.

It is found in the cytoplasm. It carries out the reaction guanosine(37) in tRNA + S-adenosyl-L-methionine = N(1)-methylguanosine(37) in tRNA + S-adenosyl-L-homocysteine + H(+). Functionally, specifically methylates guanosine-37 in various tRNAs. The chain is tRNA (guanine-N(1)-)-methyltransferase from Bartonella tribocorum (strain CIP 105476 / IBS 506).